Consider the following 230-residue polypeptide: 5'-methylthioadenosine/S-adenosylhomocysteine nucleosidase (230 aa).

The active-site Proton acceptor is the Glu12. Substrate-binding positions include Gly78, Met153, and 174–175 (ME). Asp198 acts as the Proton donor in catalysis.

This sequence belongs to the PNP/UDP phosphorylase family. MtnN subfamily.

It carries out the reaction S-adenosyl-L-homocysteine + H2O = S-(5-deoxy-D-ribos-5-yl)-L-homocysteine + adenine. The enzyme catalyses S-methyl-5'-thioadenosine + H2O = 5-(methylsulfanyl)-D-ribose + adenine. It catalyses the reaction 5'-deoxyadenosine + H2O = 5-deoxy-D-ribose + adenine. Its pathway is amino-acid biosynthesis; L-methionine biosynthesis via salvage pathway; S-methyl-5-thio-alpha-D-ribose 1-phosphate from S-methyl-5'-thioadenosine (hydrolase route): step 1/2. Catalyzes the irreversible cleavage of the glycosidic bond in both 5'-methylthioadenosine (MTA) and S-adenosylhomocysteine (SAH/AdoHcy) to adenine and the corresponding thioribose, 5'-methylthioribose and S-ribosylhomocysteine, respectively. Also cleaves 5'-deoxyadenosine, a toxic by-product of radical S-adenosylmethionine (SAM) enzymes, into 5-deoxyribose and adenine. This is 5'-methylthioadenosine/S-adenosylhomocysteine nucleosidase from Aeromonas salmonicida (strain A449).